Here is a 367-residue protein sequence, read N- to C-terminus: Methionine aminopeptidase 1 (367 aa).

The segment at 3-57 adopts a C6H2-type zinc-finger fold; it reads GILCASPGCGKPAKLQCPTCVNLKLETPSHFCSQECFKTFWPLHKMYHQKGQPEN. Zn(2+)-binding residues include Cys-6, Cys-11, Cys-19, Cys-22, Cys-34, Cys-38, His-46, and His-50. A protein is bound at residue His-185. Asp-202, Asp-213, and His-276 together coordinate Zn(2+). A protein is bound at residue His-283. Glu-309 and Glu-340 together coordinate Zn(2+).

This sequence belongs to the peptidase M24A family. Methionine aminopeptidase type 1 subfamily. As to quaternary structure, associates with the 60S ribosomal subunit of the 80S translational complex. Requires Zn(2+) as cofactor. The cofactor is Co(2+). It depends on Mn(2+) as a cofactor. Fe(2+) serves as cofactor.

Its subcellular location is the cytoplasm. The catalysed reaction is Release of N-terminal amino acids, preferentially methionine, from peptides and arylamides.. Cotranslationally removes the N-terminal methionine from nascent proteins. The N-terminal methionine is often cleaved when the second residue in the primary sequence is small and uncharged (Met-Ala-, Cys, Gly, Pro, Ser, Thr, or Val). The protein is Methionine aminopeptidase 1 (metap1) of Dictyostelium discoideum (Social amoeba).